The sequence spans 437 residues: ATP-dependent protease ATPase subunit HslU (437 aa).

ATP contacts are provided by residues V18, G60–E65, D250, E315, and R387.

The protein belongs to the ClpX chaperone family. HslU subfamily. As to quaternary structure, a double ring-shaped homohexamer of HslV is capped on each side by a ring-shaped HslU homohexamer. The assembly of the HslU/HslV complex is dependent on binding of ATP.

It is found in the cytoplasm. Functionally, ATPase subunit of a proteasome-like degradation complex; this subunit has chaperone activity. The binding of ATP and its subsequent hydrolysis by HslU are essential for unfolding of protein substrates subsequently hydrolyzed by HslV. HslU recognizes the N-terminal part of its protein substrates and unfolds these before they are guided to HslV for hydrolysis. The sequence is that of ATP-dependent protease ATPase subunit HslU from Methylorubrum extorquens (strain PA1) (Methylobacterium extorquens).